We begin with the raw amino-acid sequence, 242 residues long: MIKEINIKIKNFEGPLDLLLHLVSQYEMDIFEVPLVPVIEQYLIYIQTMKELELELAGEYMLMASQLMLIKSRRLLPTVTETFIEDTEQLEYDLLAQIDEYRKYKMLSEDLDELHQERSHYYSKSKTEIITDETVLLQDKTALDLFLAFSKILELQRQQIEDDNTMIAAEKFTIADKIFELNQKFTEQKICKFTDLFSDKTNKDELVTTFMALLELIKNQQVSFSQGELFGEIILERKEISE.

It belongs to the ScpA family. In terms of assembly, component of a cohesin-like complex composed of ScpA, ScpB and the Smc homodimer, in which ScpA and ScpB bind to the head domain of Smc. The presence of the three proteins is required for the association of the complex with DNA.

The protein resides in the cytoplasm. Its function is as follows. Participates in chromosomal partition during cell division. May act via the formation of a condensin-like complex containing Smc and ScpB that pull DNA away from mid-cell into both cell halves. This chain is Segregation and condensation protein A, found in Lactococcus lactis subsp. cremoris (strain MG1363).